A 253-amino-acid polypeptide reads, in one-letter code: Sulfate transporter CysZ (253 aa).

A run of 4 helical transmembrane segments spans residues 31-51 (FVIL…WWLF), 75-95 (LLWP…FSTI), 151-171 (IVLL…PVLW), and 222-242 (IPLL…AMWV).

Belongs to the CysZ family.

The protein localises to the cell inner membrane. In terms of biological role, high affinity, high specificity proton-dependent sulfate transporter, which mediates sulfate uptake. Provides the sulfur source for the cysteine synthesis pathway. The sequence is that of Sulfate transporter CysZ from Escherichia coli O81 (strain ED1a).